A 191-amino-acid polypeptide reads, in one-letter code: Peptide methionine sulfoxide reductase (191 aa).

Disordered regions lie at residues 1 to 20 and 168 to 191; these read MASSTTNNPALDLDSDTPEN and EKGGGNGNKQSAQKGCNDPIKCYG.

The protein belongs to the MsrA Met sulfoxide reductase family.

It carries out the reaction L-methionyl-[protein] + [thioredoxin]-disulfide + H2O = L-methionyl-(S)-S-oxide-[protein] + [thioredoxin]-dithiol. It catalyses the reaction [thioredoxin]-disulfide + L-methionine + H2O = L-methionine (S)-S-oxide + [thioredoxin]-dithiol. Functionally, has an important function as a repair enzyme for proteins that have been inactivated by oxidation. Catalyzes the reversible oxidation-reduction of methionine sulfoxide in proteins to methionine. This chain is Peptide methionine sulfoxide reductase, found in Fragaria ananassa (Strawberry).